The chain runs to 1992 residues: MALTVCVRHLTGLPGTHDRQVRLCFRGFTQKTRKIHCGREADVGELFRWPHYGSPLAGESLSVQVVNCSRVFSPRPLGTLVISLQQLQSAGHLVLREALVDERLRVSPIQVELDLKYQPPEGAAGTWAEEDFGTPIRDSLELIIPNVGFQDMEPGEAQLERRAVALGRRLARSLGTQDDEENELELEPELEEEPDVEISGVVFSPLKSRALGLPRGDPFKVCKAQDFQVGVTVLEAQKLVGVNINPYVAVRVGDQRKVTATLRGTNCPFYNEYFLFEFHETRLHLQDLLLEITAFHSQTLPFMATRIGTFRMDLGMALDQPDGHFHQKWAPLHDPRDTRAGTKGFVKITLSVRARGDLPLPPPPPCPGTSSDIEKNLLLPHGVQAERPWARLRVRVYRAEGLPTVRTGLLGSLARALHDQNVLLDPYVRVSFLGQQGETSVRGEETAPKWNEQLSFVELFPPLTRSLRLQLRDNAPLVDVALATHVLDLRQISNSGRAAGFNPTFGPAWVPLYGSLPSGRLRDDLQSLNEGLGEGIWFRGRLLVAVSMEVYEGRVEPKPSQTTQRSGLSRLTGKKKKKKEKTRQGQTPAGILQPASASTSEDAPEIPSAMEVEVEDLLPLPENALASFEDFLLFGVLFEATMIDPSLAKKPISLEISIGHAGRQEEQSGQGSRADEGSESSTLEVQPLLESEDRGAGQEEQELLGTPAQWPEPVDGNGPYLCLPLRHRKPCLHVWSCWEDYTWRLQSSNSVCKVAERLDHGLQEVEKMQRRSGPGACTRLKQTLEELVAGSRQFCHGAERRTMTRPNALDRCRAKLLTHSLNLMARQGLRLLRSLRLNNMQRTVVLAKKLLARLRFLAQEPQPPLPDVLVWMFSGQRRVAYARIPAQDILYSVVEEERGRDCGKIQSLLLTVPGAAPGEVCAKLELFLWLGLGKQAKACTSELPMDLLPEPSSGLPQSLYRDDFRYFQLRAHLYQARGVLAADDSGLSDPFARVLISTQCQTTRVLEQTLSPLWDELLVFDQLIVDGRREHLREEPPLVVINVFDHNKFGPAVFLGRAFAAPRVKLIEDPYQRPELQFFPLRKGPQAAGEVIATFELIELDYSGHLEPSVPSDVEPRDLASLVEPISGHLSLPPSVRPVLRAFRVEVLFWGLRGLGRVHLFEIEKPQVVLEVAGRRVESEVLPNYRENPNFTELVRHVTVDLPEQPYLQPPLSILVIERRAFGRTVLVGSHIVPHMLRFILQGHEDPQEEEETEEETRDLVPHGPQGEKSLPEAGTSRQLLKAPLKKLTLGLLGQGPELEEDIPDPEEMDWWSKYYASLQEFQGQPSSDDEMDEAGDADGTHLISGDREAQEQGETDSKVSVPRKKAIATLKIYNSSLEDEFSHFEDWLSVFPLYRGQGGQDGEGEGASGHFVGKFKGSFLIYPESEAKSFSEPQISRGVPQNRPIKLLVRVYIVKATNLAPADPNGKADPYVVVSAGKEQRDTKERYIPKQLNPIFGEVLELSVSLPAQPELTVAVFDHDLVGSDDLIGETHIDLENRFYSHHRANCGLASQYDVNGYNAWRDAFRPSQILAGLCQRCGLPVPEYRAGAVKVGSRVFLTPSEAPPPDDRKPKVTSEASEEAQALHVLRRWQEMPGLGIQLVPEHVETRPLYHPRSPGLLQGSLHMWIDIFPSDVPAPPPVDIKPRQPISYELRVVIWNTDDVALDDVNPLTGERSSDIYVKSWVKGLEQDRQETDVHFNSLTGEGNFNWRFVFRFDYLPTEREVSVRRKPGPFALEEAEFRQPAVLVLQVWDYDRISANDFLGSLELQLPDMVRGARDPEHCSVRLALDGAGPRCNLFRCHRLRGWWPVVKMKDMEDVEREAREAQAGKKRKRKRRAGRPEDLEFTDTGGNVYILTGKVEAEFELLTVEEAEKRPVGKGRKEPEPLEKPNRPKTSFNWFVNPLKTFIFFIWRRYWRILVLLLLALITIFLLLVFYTIPGQISEVIFSPVHK.

C2 domains are found at residues 1–97, 214–330, and 369–502; these read MALT…VLRE, PRGD…QKWA, and TSSD…AGFN. Over 1-1952 the chain is Extracellular; it reads MALTVCVRHL…PLKTFIFFIW (1952 aa). 3 disordered regions span residues 554 to 606, 661 to 686, and 691 to 710; these read RVEP…APEI, AGRQ…LEVQ, and SEDR…PAQW. Residues 559 to 569 show a composition bias toward polar residues; the sequence is PSQTTQRSGLS. The span at 572–581 shows a compositional bias: basic residues; that stretch reads TGKKKKKKEK. 2 consecutive C2 domains span residues 951–1078 and 1126–1250; these read PSSG…ELQF and ISGH…PQEE. Disordered stretches follow at residues 1245-1276 and 1322-1361; these read EDPQ…EAGT and FQGQ…SKVS. 2 stretches are compositionally biased toward acidic residues: residues 1247-1257 and 1328-1337; these read PQEEEETEEET and SDDEMDEAGD. C2 domains follow at residues 1430–1549 and 1675–1824; these read SFSE…ANCG and VPAP…EHCS. Positions 1464, 1470, 1519, 1521, 1527, 1795, 1798, and 1801 each coordinate Ca(2+). Positions 1862–1885 are disordered; that stretch reads EAREAQAGKKRKRKRRAGRPEDLE. A compositionally biased stretch (basic residues) spans 1869-1878; the sequence is GKKRKRKRRA. Residues 1953 to 1973 form a helical membrane-spanning segment; that stretch reads RRYWRILVLLLLALITIFLLL. The Cytoplasmic portion of the chain corresponds to 1974 to 1992; it reads VFYTIPGQISEVIFSPVHK.

Ca(2+) is required as a cofactor.

It is found in the membrane. This Mus musculus (Mouse) protein is Fer-1-like protein 4 (Fer1l4).